The sequence spans 210 residues: Probable nicotinate-nucleotide adenylyltransferase (210 aa).

It belongs to the NadD family.

The enzyme catalyses nicotinate beta-D-ribonucleotide + ATP + H(+) = deamido-NAD(+) + diphosphate. Its pathway is cofactor biosynthesis; NAD(+) biosynthesis; deamido-NAD(+) from nicotinate D-ribonucleotide: step 1/1. Its function is as follows. Catalyzes the reversible adenylation of nicotinate mononucleotide (NaMN) to nicotinic acid adenine dinucleotide (NaAD). This is Probable nicotinate-nucleotide adenylyltransferase from Streptococcus mutans serotype c (strain ATCC 700610 / UA159).